The following is a 286-amino-acid chain: Haloalkane dehalogenase 2 (286 aa).

The region spanning 35–134 (PPILLCHGNP…RVRGVVLGNT (100 aa)) is the AB hydrolase-1 domain. Asp-109 serves as the catalytic Nucleophile. Asp-238 (proton donor) is an active-site residue. Residue His-267 is the Proton acceptor of the active site.

Belongs to the haloalkane dehalogenase family. Type 1 subfamily. Monomer.

It catalyses the reaction 1-haloalkane + H2O = a halide anion + a primary alcohol + H(+). Its function is as follows. Catalyzes hydrolytic cleavage of carbon-halogen bonds in halogenated aliphatic compounds, leading to the formation of the corresponding primary alcohols, halide ions and protons. This Mycobacterium bovis (strain ATCC BAA-935 / AF2122/97) protein is Haloalkane dehalogenase 2 (dhmA2).